The following is a 170-amino-acid chain: MAQTDRRATGDGLLEKLVGVRRVAKVVKGGRQFGFSALTVVGDGKGRVGFGRGKAREVPVAIQKAMENARKNMISVPLEGDTLQHPITARHGAAKVHMQPASEGTGIIAGGAMRAVFEVVGVHNVLAKCIGSANPVNVVQATVKGLVQMSSPEAIAAKRGKNLEEIVGGG.

An S5 DRBM domain is found at 13–76; that stretch reads LLEKLVGVRR…ENARKNMISV (64 aa).

It belongs to the universal ribosomal protein uS5 family. As to quaternary structure, part of the 30S ribosomal subunit. Contacts proteins S4 and S8.

Functionally, with S4 and S12 plays an important role in translational accuracy. Located at the back of the 30S subunit body where it stabilizes the conformation of the head with respect to the body. The protein is Small ribosomal subunit protein uS5 of Nitrosococcus oceani (strain ATCC 19707 / BCRC 17464 / JCM 30415 / NCIMB 11848 / C-107).